A 413-amino-acid polypeptide reads, in one-letter code: Phosphoglycerate kinase (413 aa).

Substrate contacts are provided by residues 24-26, Arg-39, 62-65, Arg-123, and Arg-165; these read DFN and HLSR. ATP-binding positions include Lys-216, Glu-343, and 369–372; that span reads GGDS.

The protein belongs to the phosphoglycerate kinase family. In terms of assembly, monomer.

It is found in the cytoplasm. The enzyme catalyses (2R)-3-phosphoglycerate + ATP = (2R)-3-phospho-glyceroyl phosphate + ADP. Its pathway is carbohydrate degradation; glycolysis; pyruvate from D-glyceraldehyde 3-phosphate: step 2/5. This Mycoplasmoides gallisepticum (strain R(low / passage 15 / clone 2)) (Mycoplasma gallisepticum) protein is Phosphoglycerate kinase.